We begin with the raw amino-acid sequence, 589 residues long: Zinc finger protein 703 (589 aa).

Positions 102–315 (SQIGKPDPPP…GTGHIAPVSP (214 aa)) are disordered. The segment covering 113 to 122 (SKLGSLSSSS) has biased composition (low complexity). Basic and acidic residues predominate over residues 137 to 148 (SGEHQNLDDKSS). Residues 179–188 (NGSSSSVTCT) show a composition bias toward polar residues. Low complexity predominate over residues 196–206 (SPRASSPQQTS). The span at 214-230 (QSQSPLSQKTAHLQTTH) shows a compositional bias: polar residues. A compositionally biased stretch (low complexity) spans 237-250 (GSDPGNDSSSSGSD). Over residues 251 to 262 (RNGKKDSDHNKS) the composition is skewed to basic and acidic residues. The span at 272–299 (SSHARASVNSSSASSSSSPQPDSKTDSQ) shows a compositional bias: low complexity. A required for interaction with Groucho and hdac2 plays an important role in repression of transcription region spans residues 408-460 (VHDPSSALKSGFPLMYPTHHLHSLHPSSLSSSATSSLSHPLYTYGFMLPNETL). The C2H2-type zinc-finger motif lies at 462-490 (HACNWVSVGGPCDKRFATSEELLAHLRTH). Positions 498-589 (GKLLSGYPSS…LGSASALGYQ (92 aa)) are required for self-association and nuclear localization.

Belongs to the Elbow/Noc family. Self-associates. Interacts with nlz2. May interact with Groucho corepressor proteins.

It is found in the nucleus. Its subcellular location is the cytoplasm. Its function is as follows. Transcriptional corepressor which does not bind directly to DNA and may regulate transcription through recruitment of histone deacetylases to gene promoters. Required for segmental gene expression during hindbrain development. May regulate cell adhesion, migration and proliferation. In Danio rerio (Zebrafish), this protein is Zinc finger protein 703 (znf703).